Reading from the N-terminus, the 266-residue chain is MAVVTMRELLDAGVHFGHQTRRWNPKMRRFIFTDRNGIYIIDLQQTLTYIDEAYEFVKETVAHGGTILYVGTKKQAQESVKNEAERVGMPYVNHRWLGGMLTNFQTVSKRLHRMKELQAMDAAENGYEGRTKKEVLMLTRERTKLERVLGGIADMTKTPSAMWVVDTNKEHIAVSEAHKLNIPVVAILDTNCDPDVVNFPVPGNDDAIRSIDVLTKVISHAVIEGKKAREERALAAAKEAAGDANKTEVAAKVEATEEVAAEAEAK.

The protein belongs to the universal ribosomal protein uS2 family.

In Corynebacterium diphtheriae (strain ATCC 700971 / NCTC 13129 / Biotype gravis), this protein is Small ribosomal subunit protein uS2.